The chain runs to 311 residues: Probable manganese-dependent inorganic pyrophosphatase (311 aa).

Mn(2+) is bound by residues His-9, Asp-13, Asp-15, Asp-77, His-99, and Asp-151.

This sequence belongs to the PPase class C family. Requires Mn(2+) as cofactor.

Its subcellular location is the cytoplasm. It catalyses the reaction diphosphate + H2O = 2 phosphate + H(+). This chain is Probable manganese-dependent inorganic pyrophosphatase, found in Streptococcus agalactiae serotype III (strain NEM316).